Here is a 154-residue protein sequence, read N- to C-terminus: Transcriptional repressor NrdR (154 aa).

The segment at 3-34 (CPYCRHPDSRVVDSREADDGQLIRRRRSCPEC) is a zinc-finger region. The ATP-cone domain maps to 46–136 (LAVVKRSGVT…VYRSFESLAD (91 aa)).

It belongs to the NrdR family. Zn(2+) is required as a cofactor.

Functionally, negatively regulates transcription of bacterial ribonucleotide reductase nrd genes and operons by binding to NrdR-boxes. The protein is Transcriptional repressor NrdR of Salinispora arenicola (strain CNS-205).